Here is a 290-residue protein sequence, read N- to C-terminus: Ribosomal RNA small subunit methyltransferase A (290 aa).

S-adenosyl-L-methionine-binding residues include asparagine 27, leucine 29, glycine 54, glutamate 75, aspartate 100, and asparagine 125.

This sequence belongs to the class I-like SAM-binding methyltransferase superfamily. rRNA adenine N(6)-methyltransferase family. RsmA subfamily.

The protein localises to the cytoplasm. It carries out the reaction adenosine(1518)/adenosine(1519) in 16S rRNA + 4 S-adenosyl-L-methionine = N(6)-dimethyladenosine(1518)/N(6)-dimethyladenosine(1519) in 16S rRNA + 4 S-adenosyl-L-homocysteine + 4 H(+). In terms of biological role, specifically dimethylates two adjacent adenosines (A1518 and A1519) in the loop of a conserved hairpin near the 3'-end of 16S rRNA in the 30S particle. May play a critical role in biogenesis of 30S subunits. This is Ribosomal RNA small subunit methyltransferase A from Streptococcus pneumoniae (strain ATCC BAA-255 / R6).